The following is a 393-amino-acid chain: Chorismate synthase (393 aa).

Residues Arg-40 and Arg-46 each contribute to the NADP(+) site. Residues 129–131, 249–250, Gly-301, 316–320, and Arg-342 contribute to the FMN site; these read RSS, QA, and KPIPT.

This sequence belongs to the chorismate synthase family. Homotetramer. FMNH2 serves as cofactor.

It carries out the reaction 5-O-(1-carboxyvinyl)-3-phosphoshikimate = chorismate + phosphate. It functions in the pathway metabolic intermediate biosynthesis; chorismate biosynthesis; chorismate from D-erythrose 4-phosphate and phosphoenolpyruvate: step 7/7. Catalyzes the anti-1,4-elimination of the C-3 phosphate and the C-6 proR hydrogen from 5-enolpyruvylshikimate-3-phosphate (EPSP) to yield chorismate, which is the branch point compound that serves as the starting substrate for the three terminal pathways of aromatic amino acid biosynthesis. This reaction introduces a second double bond into the aromatic ring system. In Geotalea daltonii (strain DSM 22248 / JCM 15807 / FRC-32) (Geobacter daltonii), this protein is Chorismate synthase.